Consider the following 330-residue polypeptide: Urokinase plasminogen activator surface receptor (330 aa).

Positions 1–20 are cleaved as a signal peptide; that stretch reads MGQPLLLLLLVYTYIPGSWG. UPAR/Ly6 domains follow at residues 21 to 112, 113 to 208, and 209 to 300; these read LRCL…RNRY, LECA…PPNG, and LQCY…PGKG. 3 disulfide bridges follow: Cys-23-Cys-44, Cys-26-Cys-32, and Cys-37-Cys-65. N-linked (GlcNAc...) asparagine glycosylation is present at Asn-28. A glycan (N-linked (GlcNAc...) asparagine) is linked at Asn-72. 11 disulfide bridges follow: Cys-91/Cys-96, Cys-115/Cys-142, Cys-118/Cys-125, Cys-135/Cys-164, Cys-170/Cys-187, Cys-188/Cys-193, Cys-211/Cys-239, Cys-214/Cys-222, Cys-232/Cys-258, Cys-264/Cys-282, and Cys-283/Cys-288. N-linked (GlcNAc...) asparagine glycosylation is found at Asn-179 and Asn-189. Asn-279 carries an N-linked (GlcNAc...) asparagine glycan. Residue Gly-300 is the site of GPI-anchor amidated glycine attachment. The propeptide at 301–330 is removed in mature form; the sequence is GAPKTSPAHLSFFVSLLLTARLWGATLLCT.

In terms of assembly, monomer. Interacts (via the UPAR/Ly6 domains) with SRPX2. Interacts with MRC2. Interacts with SORL1 (via N-terminal ectodomain); this interaction decreases PLAUR internalization. The ternary complex composed of PLAUR-PLAU-SERPINE1 also interacts with SORL1. Interacts with CD82; this interaction prevents PLAUR from binding to its high affinity ligand PLAU.

It localises to the cell membrane. Acts as a receptor for urokinase plasminogen activator. Plays a role in localizing and promoting plasmin formation. Mediates the proteolysis-independent signal transduction activation effects of U-PA. This is Urokinase plasminogen activator surface receptor (PLAUR) from Bos taurus (Bovine).